The following is a 285-amino-acid chain: MIDLLGLDLDGTLLSKTKKINNPSKLALTNLIAKKPSLKVMILTGRSVFSTLKHVEKLNSLFKKPIVDYFCCYGGAKLYQIEANKPQERYKFCLENSVVETTFSIIKKHRGLCLAYLDSYVSPYLCLAGNKLLGWFTKYFWYRKRCVFFNQNHLKQGILKISVYFLSAKRCKKVYEILKNTFQEKVNVLSFSNNLIEITHHDANKGYAIEYMAKREQLSLNRIAVIGDSWNDYAMFKKAKYSFAMSKSPSQLKLIATNTSNKTNRYRFSTLLNLISETIINQKAD.

Asp-8 (nucleophile) is an active-site residue. Residue Asp-8 participates in Mg(2+) binding. Leu-9 serves as a coordination point for phosphate. Asp-10 contributes to the Mg(2+) binding site. Residues 44–45 (TG) and Lys-205 contribute to the phosphate site. Residues Asp-228 and Ser-229 each coordinate Mg(2+). Phosphate is bound at residue Asn-231.

This sequence belongs to the HAD-like hydrolase superfamily. Cof family. Mg(2+) serves as cofactor.

The polypeptide is Putative phosphatase MG125 (Mycoplasma genitalium (strain ATCC 33530 / DSM 19775 / NCTC 10195 / G37) (Mycoplasmoides genitalium)).